The chain runs to 136 residues: Ribosome-binding factor A (136 aa).

This sequence belongs to the RbfA family. Monomer. Binds 30S ribosomal subunits, but not 50S ribosomal subunits or 70S ribosomes.

Its subcellular location is the cytoplasm. In terms of biological role, one of several proteins that assist in the late maturation steps of the functional core of the 30S ribosomal subunit. Associates with free 30S ribosomal subunits (but not with 30S subunits that are part of 70S ribosomes or polysomes). Required for efficient processing of 16S rRNA. May interact with the 5'-terminal helix region of 16S rRNA. In Photorhabdus laumondii subsp. laumondii (strain DSM 15139 / CIP 105565 / TT01) (Photorhabdus luminescens subsp. laumondii), this protein is Ribosome-binding factor A.